The primary structure comprises 621 residues: Elongation factor 4 (621 aa).

Residues 21–203 (DLIRNICIIA…AIVKRVPPPK (183 aa)) form the tr-type G domain. GTP contacts are provided by residues 33–38 (DHGKTT) and 150–153 (NKID).

The protein belongs to the TRAFAC class translation factor GTPase superfamily. Classic translation factor GTPase family. LepA subfamily.

It is found in the cell inner membrane. The catalysed reaction is GTP + H2O = GDP + phosphate + H(+). In terms of biological role, required for accurate and efficient protein synthesis under certain stress conditions. May act as a fidelity factor of the translation reaction, by catalyzing a one-codon backward translocation of tRNAs on improperly translocated ribosomes. Back-translocation proceeds from a post-translocation (POST) complex to a pre-translocation (PRE) complex, thus giving elongation factor G a second chance to translocate the tRNAs correctly. Binds to ribosomes in a GTP-dependent manner. This is Elongation factor 4 from Thermotoga maritima (strain ATCC 43589 / DSM 3109 / JCM 10099 / NBRC 100826 / MSB8).